We begin with the raw amino-acid sequence, 396 residues long: NADH-quinone oxidoreductase subunit D 1 (396 aa).

The protein belongs to the complex I 49 kDa subunit family. As to quaternary structure, NDH-1 is composed of 14 different subunits. Subunits NuoB, C, D, E, F, and G constitute the peripheral sector of the complex.

The protein localises to the cell inner membrane. The enzyme catalyses a quinone + NADH + 5 H(+)(in) = a quinol + NAD(+) + 4 H(+)(out). NDH-1 shuttles electrons from NADH, via FMN and iron-sulfur (Fe-S) centers, to quinones in the respiratory chain. The immediate electron acceptor for the enzyme in this species is believed to be ubiquinone. Couples the redox reaction to proton translocation (for every two electrons transferred, four hydrogen ions are translocated across the cytoplasmic membrane), and thus conserves the redox energy in a proton gradient. The sequence is that of NADH-quinone oxidoreductase subunit D 1 from Rhizobium etli (strain CIAT 652).